We begin with the raw amino-acid sequence, 361 residues long: Tyrosine--tRNA ligase (361 aa).

Residues Tyr-36, Tyr-162, Gln-166, Asp-169, and Gln-184 each contribute to the L-tyrosine site. The 'KMSKS' region signature appears at 235–239; that stretch reads KMSKS. Lys-238 contributes to the ATP binding site.

Belongs to the class-I aminoacyl-tRNA synthetase family. TyrS type 4 subfamily. As to quaternary structure, homodimer.

Its subcellular location is the cytoplasm. It catalyses the reaction tRNA(Tyr) + L-tyrosine + ATP = L-tyrosyl-tRNA(Tyr) + AMP + diphosphate + H(+). In terms of biological role, catalyzes the attachment of tyrosine to tRNA(Tyr) in a two-step reaction: tyrosine is first activated by ATP to form Tyr-AMP and then transferred to the acceptor end of tRNA(Tyr). In Sulfolobus acidocaldarius (strain ATCC 33909 / DSM 639 / JCM 8929 / NBRC 15157 / NCIMB 11770), this protein is Tyrosine--tRNA ligase.